Consider the following 425-residue polypeptide: Keratin, type II cytoskeletal I (425 aa).

The interval Phe1 to Leu16 is coil 1A. An IF rod domain is found at Phe1–Ile296. The linker 1 stretch occupies residues Gln17–Tyr37. Residues Ile38–Val129 form a coil 1B region. The tract at residues His130 to Ile153 is linker 12. The tract at residues Ile154–Glu292 is coil 2. Residues Glu293–Tyr425 are tail.

It belongs to the intermediate filament family. As to quaternary structure, heterotetramer of two type I and two type II keratins.

This chain is Keratin, type II cytoskeletal I, found in Xenopus laevis (African clawed frog).